The primary structure comprises 249 residues: DNA repair protein RecO (249 aa).

The protein belongs to the RecO family.

Its function is as follows. Involved in DNA repair and RecF pathway recombination. In Mycoplasma capricolum subsp. capricolum (strain California kid / ATCC 27343 / NCTC 10154), this protein is DNA repair protein RecO.